The following is a 623-amino-acid chain: E3 ubiquitin-protein ligase ORTHRUS 5 (623 aa).

Residues 12 to 62 (DGVCMRCQVNPPSEETLTCGTCVTPWHVSCLLPESLASSTGDWECPDCSGV) form a PHD-type zinc finger. The RING-type 1 zinc-finger motif lies at 129-169 (CSICIQLPERPVTTPCGHNFCLKCFEKWAVGQGKLTCMICR). The YDG domain occupies 258-407 (TRNQGVLVGE…HKMCRYLFVR (150 aa)). The segment at 498 to 555 (CQICRKVLSLPVTTPCAHNFCKACLEAKFAGITQLRDRSNGVRKLRAKKNIMTCPCCT) adopts an RING-type 2 zinc-finger fold. The disordered stretch occupies residues 580 to 623 (KSEEEAEVAESSNISEEEGEEESEPPTKKIKMDKNSVGGTSLSA). A compositionally biased stretch (acidic residues) spans 594-603 (SEEEGEEESE). Residues 604 to 613 (PPTKKIKMDK) show a composition bias toward basic and acidic residues.

Expressed in inflorescences.

The protein resides in the nucleus. It carries out the reaction S-ubiquitinyl-[E2 ubiquitin-conjugating enzyme]-L-cysteine + [acceptor protein]-L-lysine = [E2 ubiquitin-conjugating enzyme]-L-cysteine + N(6)-ubiquitinyl-[acceptor protein]-L-lysine.. The protein operates within protein modification; protein ubiquitination. Its function is as follows. E3 ubiquitin-protein ligase. Participates in CpG methylation-dependent transcriptional regulation and epigenetic transcriptional silencing. Mediates ubiquitination with the E2 ubiquitin-conjugating enzyme UBC11. The chain is E3 ubiquitin-protein ligase ORTHRUS 5 (ORTH5) from Arabidopsis thaliana (Mouse-ear cress).